Reading from the N-terminus, the 312-residue chain is Pantothenate kinase (312 aa).

97–104 (GSVAVGKS) provides a ligand contact to ATP.

Belongs to the prokaryotic pantothenate kinase family.

Its subcellular location is the cytoplasm. The enzyme catalyses (R)-pantothenate + ATP = (R)-4'-phosphopantothenate + ADP + H(+). The protein operates within cofactor biosynthesis; coenzyme A biosynthesis; CoA from (R)-pantothenate: step 1/5. This chain is Pantothenate kinase, found in Mycobacterium sp. (strain JLS).